Here is a 466-residue protein sequence, read N- to C-terminus: Asparagine--tRNA ligase (466 aa).

It belongs to the class-II aminoacyl-tRNA synthetase family. In terms of assembly, homodimer.

Its subcellular location is the cytoplasm. It catalyses the reaction tRNA(Asn) + L-asparagine + ATP = L-asparaginyl-tRNA(Asn) + AMP + diphosphate + H(+). The polypeptide is Asparagine--tRNA ligase (Vibrio cholerae serotype O1 (strain ATCC 39315 / El Tor Inaba N16961)).